A 484-amino-acid polypeptide reads, in one-letter code: Aspartyl/glutamyl-tRNA(Asn/Gln) amidotransferase subunit B (484 aa).

It belongs to the GatB/GatE family. GatB subfamily. Heterotrimer of A, B and C subunits.

The enzyme catalyses L-glutamyl-tRNA(Gln) + L-glutamine + ATP + H2O = L-glutaminyl-tRNA(Gln) + L-glutamate + ADP + phosphate + H(+). It catalyses the reaction L-aspartyl-tRNA(Asn) + L-glutamine + ATP + H2O = L-asparaginyl-tRNA(Asn) + L-glutamate + ADP + phosphate + 2 H(+). Its function is as follows. Allows the formation of correctly charged Asn-tRNA(Asn) or Gln-tRNA(Gln) through the transamidation of misacylated Asp-tRNA(Asn) or Glu-tRNA(Gln) in organisms which lack either or both of asparaginyl-tRNA or glutaminyl-tRNA synthetases. The reaction takes place in the presence of glutamine and ATP through an activated phospho-Asp-tRNA(Asn) or phospho-Glu-tRNA(Gln). The sequence is that of Aspartyl/glutamyl-tRNA(Asn/Gln) amidotransferase subunit B from Dechloromonas aromatica (strain RCB).